The sequence spans 619 residues: (-)-camphene synthase, chloroplastic (619 aa).

A chloroplast-targeting transit peptide spans 1–47 (MALVSVAPLVSMRRSLFSSPYELKSIDKTIPNLVMCRKRMSGTPSIR). Asp370, Asp374, and Asp522 together coordinate Mg(2+). A DDXXD motif motif is present at residues 370–374 (DDIYD).

It belongs to the terpene synthase family. Tpsd subfamily. Requires Mg(2+) as cofactor. It depends on Mn(2+) as a cofactor.

The protein localises to the plastid. It is found in the chloroplast. The enzyme catalyses (2E)-geranyl diphosphate = (1S,4R)-camphene + diphosphate. It carries out the reaction (2E)-geranyl diphosphate = (1R,5R)-alpha-pinene + diphosphate. It catalyses the reaction (2E)-geranyl diphosphate = tricyclene + diphosphate. The catalysed reaction is (2E)-geranyl diphosphate = beta-myrcene + diphosphate. The enzyme catalyses (2E)-geranyl diphosphate = (1S,5S)-beta-pinene + diphosphate. It carries out the reaction (2E)-geranyl diphosphate = (1S,5S)-alpha-pinene + diphosphate. It functions in the pathway terpene metabolism; oleoresin biosynthesis. Its pathway is secondary metabolite biosynthesis; terpenoid biosynthesis. In terms of biological role, monoterpene synthase (TPS) involved in the biosynthesis of monoterpene natural products included in conifer oleoresin secretions and volatile emissions; these compounds contribute to biotic and abiotic stress defense against herbivores and pathogens. Catalyzes the conversion of (2E)-geranyl diphosphate (GPP) to (-)-camphene, (+)-alpha-pinene and (-)-alpha-pinene, and, to a lower extent, to tricyclene, myrcene and (-)-beta-pinene. The sequence is that of (-)-camphene synthase, chloroplastic from Pinus contorta (Shore pine).